Here is a 386-residue protein sequence, read N- to C-terminus: 2,3-diketo-5-methylthiopentyl-1-phosphate enolase (386 aa).

The Proton acceptor role is filled by Lys85. Residues Lys131, 157 to 160 (KDDE), His248, Gly316, and 338 to 339 (GT) contribute to the substrate site. Lys157, Asp159, and Glu160 together coordinate Mg(2+). The residue at position 157 (Lys157) is an N6-carboxylysine.

The protein belongs to the RuBisCO large chain family. Type IV subfamily. As to quaternary structure, homodimer. It depends on Mg(2+) as a cofactor.

It catalyses the reaction 5-methylsulfanyl-2,3-dioxopentyl phosphate = 2-hydroxy-5-methylsulfanyl-3-oxopent-1-enyl phosphate. The protein operates within amino-acid biosynthesis; L-methionine biosynthesis via salvage pathway; L-methionine from S-methyl-5-thio-alpha-D-ribose 1-phosphate: step 3/6. In terms of biological role, catalyzes the enolization of 2,3-diketo-5-methylthiopentyl-1-phosphate (DK-MTP-1-P) into 2-hydroxy-3-keto-5-methylthiopentenyl-1-phosphate (HK-MTPenyl-1-P). The polypeptide is 2,3-diketo-5-methylthiopentyl-1-phosphate enolase (mtnW) (Microcystis aeruginosa).